The following is a 282-amino-acid chain: ATP synthase gamma chain (282 aa).

The protein belongs to the ATPase gamma chain family. In terms of assembly, F-type ATPases have 2 components, CF(1) - the catalytic core - and CF(0) - the membrane proton channel. CF(1) has five subunits: alpha(3), beta(3), gamma(1), delta(1), epsilon(1). CF(0) has three main subunits: a, b and c.

It localises to the cell membrane. Functionally, produces ATP from ADP in the presence of a proton gradient across the membrane. The gamma chain is believed to be important in regulating ATPase activity and the flow of protons through the CF(0) complex. This Clostridium botulinum (strain Kyoto / Type A2) protein is ATP synthase gamma chain.